We begin with the raw amino-acid sequence, 86 residues long: Small ribosomal subunit protein bS20 (86 aa).

Positions methionine 1–lysine 25 are disordered.

It belongs to the bacterial ribosomal protein bS20 family.

Binds directly to 16S ribosomal RNA. This Exiguobacterium sp. (strain ATCC BAA-1283 / AT1b) protein is Small ribosomal subunit protein bS20.